The chain runs to 367 residues: Phospho-N-acetylmuramoyl-pentapeptide-transferase (367 aa).

Helical transmembrane passes span 13–33, 49–69, 95–115, 119–139, 154–174, 183–203, 215–235, 237–257, 281–301, and 347–367; these read ISGI…ALTL, LPLL…VPLL, MGGI…SNFA, LAVS…DWQI, LALQ…NQPA, WVSF…FVLV, IDGL…AIVA, TSPA…GFLA, AVAL…IFFV, and VSSF…IAPF.

It belongs to the glycosyltransferase 4 family. MraY subfamily. It depends on Mg(2+) as a cofactor.

The protein resides in the cell inner membrane. It carries out the reaction UDP-N-acetyl-alpha-D-muramoyl-L-alanyl-gamma-D-glutamyl-meso-2,6-diaminopimeloyl-D-alanyl-D-alanine + di-trans,octa-cis-undecaprenyl phosphate = di-trans,octa-cis-undecaprenyl diphospho-N-acetyl-alpha-D-muramoyl-L-alanyl-D-glutamyl-meso-2,6-diaminopimeloyl-D-alanyl-D-alanine + UMP. The protein operates within cell wall biogenesis; peptidoglycan biosynthesis. Its function is as follows. Catalyzes the initial step of the lipid cycle reactions in the biosynthesis of the cell wall peptidoglycan: transfers peptidoglycan precursor phospho-MurNAc-pentapeptide from UDP-MurNAc-pentapeptide onto the lipid carrier undecaprenyl phosphate, yielding undecaprenyl-pyrophosphoryl-MurNAc-pentapeptide, known as lipid I. This Trichormus variabilis (strain ATCC 29413 / PCC 7937) (Anabaena variabilis) protein is Phospho-N-acetylmuramoyl-pentapeptide-transferase.